The sequence spans 465 residues: Spermidine/putrescine import ATP-binding protein PotA (465 aa).

Residues 1–18 (MTATSGARTSDARTSGAR) show a composition bias toward polar residues. The tract at residues 1–21 (MTATSGARTSDARTSGARTSD) is disordered. An ABC transporter domain is found at 30 to 264 (IELVGVAKDY…PRTRFVAGFI (235 aa)). ATP is bound at residue 66–73 (GPSGCGKS).

Belongs to the ABC transporter superfamily. Spermidine/putrescine importer (TC 3.A.1.11.1) family. As to quaternary structure, the complex is composed of two ATP-binding proteins (PotA), two transmembrane proteins (PotB and PotC) and a solute-binding protein (PotD).

It localises to the cell membrane. The catalysed reaction is ATP + H2O + polyamine-[polyamine-binding protein]Side 1 = ADP + phosphate + polyamineSide 2 + [polyamine-binding protein]Side 1.. Part of the ABC transporter complex PotABCD involved in spermidine/putrescine import. Responsible for energy coupling to the transport system. The polypeptide is Spermidine/putrescine import ATP-binding protein PotA (Frankia alni (strain DSM 45986 / CECT 9034 / ACN14a)).